Consider the following 342-residue polypeptide: Immune-associated nucleotide-binding protein 9 (342 aa).

In terms of domain architecture, AIG1-type G spans 22-229 (NPKRTLVLVG…YSDELFHELQ (208 aa)). A G1 region spans residues 31–38 (GRTGNGKS). GTP is bound by residues 31–39 (GRTGNGKSA) and S52. The tract at residues 58–62 (GVTST) is G2. Residues 80–83 (DTPG) form a G3 region. Positions 149–152 (TGGD) are G4. A G5 region spans residues 188–190 (NNK). N189 contributes to the GTP binding site. Residues 276–342 (ETKLRDTAKR…QKKLGKCINL (67 aa)) adopt a coiled-coil conformation.

Belongs to the TRAFAC class TrmE-Era-EngA-EngB-Septin-like GTPase superfamily. AIG1/Toc34/Toc159-like paraseptin GTPase family. IAN subfamily. Mainly expressed in leaves.

The protein is Immune-associated nucleotide-binding protein 9 of Arabidopsis thaliana (Mouse-ear cress).